Here is a 79-residue protein sequence, read N- to C-terminus: Sperm-specific basic nuclear protein SP4 (79 aa).

The tract at residues 1–79 (MSKVSGGSRR…ARDYGSDYRS (79 aa)) is disordered. Residues 9-60 (RRTRARRPMSNRRGRRSQSAAHRSRAQRRRRRTGTTRRARTSTARRARTRTA) show a composition bias toward basic residues. 2 repeats span residues 45-52 (RRARTSTA) and 53-60 (RRARTRTA). Basic and acidic residues predominate over residues 61-79 (RRSDLTRMMARDYGSDYRS).

It localises to the nucleus. This Xenopus laevis (African clawed frog) protein is Sperm-specific basic nuclear protein SP4 (sp4-a).